A 642-amino-acid chain; its full sequence is Dihydrolipoyllysine-residue acetyltransferase component of pyruvate dehydrogenase complex, mitochondrial (642 aa).

The N-terminal 85 residues, 1–85 (MWRVCARRAR…LLGSPSRRSY (85 aa)), are a transit peptide targeting the mitochondrion. The tract at residues 80–99 (PSRRSYSLPPHQKVPLPSLS) is disordered. Lipoyl-binding domains follow at residues 90–166 (HQKV…CITV) and 217–293 (HMQI…CIIV). Serine 99 is subject to Phosphoserine. Lysine 131 and lysine 258 each carry N6-lipoyllysine. Residues 313–346 (LKPQAAPPAPPPVAAVPPTPQPVAPTPSAAPAGP) are disordered. Residues 317 to 337 (AAPPAPPPVAAVPPTPQPVAP) are compositionally biased toward pro residues. The Peripheral subunit-binding (PSBD) domain occupies 351–388 (FVSPLAKKLAAEKGIDLTQVKGTGPEGRIIKKDIDSFV). Arginine 456 provides a ligand contact to CoA. Lysine 461 carries the N6-acetyllysine modification. Lysine 468 is subject to N6-succinyllysine. CoA is bound at residue serine 470. The residue at position 542 (lysine 542) is an N6-succinyllysine. CoA contacts are provided by serine 561, asparagine 562, and glycine 586. Residues histidine 615 and aspartate 619 contribute to the active site.

The protein belongs to the 2-oxoacid dehydrogenase family. Part of the pyruvate dehydrogenase complex (PDHc) that is a multi-enzyme complex composed of multiple copies of three enzymes, pyruvate dehydrogenase (subunits PDH1A and PDHB, E1 component), dihydrolipoamide acetyltransferase (DLAT, E2 component), and dihydrolipoamide dehydrogenase (DLD, E3 component) to which is added an additional protein the E3-binding protein (PDHX, E3BP). In terms of structural architecture, the E2 and E3BP components assemble into a 60meric central core with icosahedral symmetry. The central core is decorated with E1 and E3 proteins. Currently, two alternative models for the E2:E3BP stoichiometry are considered as being either 48:12 (E2(48)-E3BP(12)) or 40:20 (E2(40)-E3BP(20)). Interacts with PDK2 and PDK3. Interacts with SIRT4. Interacts with PDHB. Requires (R)-lipoate as cofactor. In terms of processing, delipoylated at Lys-131 and Lys-258 by SIRT4, delipoylation decreases the PHD complex activity.

The protein resides in the mitochondrion matrix. The catalysed reaction is N(6)-[(R)-dihydrolipoyl]-L-lysyl-[protein] + acetyl-CoA = N(6)-[(R)-S(8)-acetyldihydrolipoyl]-L-lysyl-[protein] + CoA. In terms of biological role, as part of the pyruvate dehydrogenase complex, catalyzes the transfers of an acetyl group to a lipoic acid moiety. The pyruvate dehydrogenase complex, catalyzes the overall conversion of pyruvate to acetyl-CoA and CO(2), and thereby links cytoplasmic glycolysis and the mitochondrial tricarboxylic acid (TCA) cycle. This chain is Dihydrolipoyllysine-residue acetyltransferase component of pyruvate dehydrogenase complex, mitochondrial, found in Mus musculus (Mouse).